Here is a 467-residue protein sequence, read N- to C-terminus: 3-isopropylmalate dehydratase large subunit (467 aa).

Residues cysteine 348, cysteine 409, and cysteine 412 each coordinate [4Fe-4S] cluster. The tract at residues 423-449 (NERSISTSNRNFEGRQGKGSRTHLASP) is disordered.

The protein belongs to the aconitase/IPM isomerase family. LeuC type 1 subfamily. As to quaternary structure, heterodimer of LeuC and LeuD. Requires [4Fe-4S] cluster as cofactor.

It catalyses the reaction (2R,3S)-3-isopropylmalate = (2S)-2-isopropylmalate. It participates in amino-acid biosynthesis; L-leucine biosynthesis; L-leucine from 3-methyl-2-oxobutanoate: step 2/4. In terms of biological role, catalyzes the isomerization between 2-isopropylmalate and 3-isopropylmalate, via the formation of 2-isopropylmaleate. This chain is 3-isopropylmalate dehydratase large subunit, found in Bifidobacterium longum subsp. infantis (strain ATCC 15697 / DSM 20088 / JCM 1222 / NCTC 11817 / S12).